The primary structure comprises 308 residues: Probable lipid phosphate phosphatase 4 (308 aa).

6 helical membrane passes run 26 to 46 (WLIL…EPFH), 66 to 86 (IPMW…FIVY), 93 to 113 (VYDL…TGVT), 162 to 182 (SFPS…AWYL), 193 to 213 (GHVA…LIGI), and 226 to 246 (VFAG…HFFP). The disordered stretch occupies residues 274 to 308 (MTRTGSRGMLGNDVEPGNSASSPHDRHRESTDSDF). A compositionally biased stretch (basic and acidic residues) spans 296–308 (PHDRHRESTDSDF).

Belongs to the PA-phosphatase related phosphoesterase family.

The protein resides in the membrane. The sequence is that of Probable lipid phosphate phosphatase 4 (LPP4) from Arabidopsis thaliana (Mouse-ear cress).